Consider the following 453-residue polypeptide: UDP-glycosyltransferase 76E1 (453 aa).

UDP-alpha-D-glucose-binding positions include Ser-272, 331 to 333, 348 to 356, and 370 to 373; these read APQ, HCGWNSTLE, and TGDQ.

This sequence belongs to the UDP-glycosyltransferase family.

Possesses low quercetin 3-O-glucosyltransferase and 7-O-glucosyltransferase activities in vitro. The chain is UDP-glycosyltransferase 76E1 (UGT76E1) from Arabidopsis thaliana (Mouse-ear cress).